Reading from the N-terminus, the 163-residue chain is MAKRRAAEPLTFRVPWKRLLLSDFPEEPPLWVPPSGTARPLKRQGDAGIMAEPASAPRKRRGGGDDRQELQGCSREPGEPPPGEQEEPRAAGGGDRVESAGSPQVADGVHSQQPEEFWQYNTFQYWRNPLPPLDLAALEDVSANSLTETLEDKNEGVEIDMES.

The segment at 23–113 (DFPEEPPLWV…QVADGVHSQQ (91 aa)) is disordered. At Ser-102 the chain carries Phosphoserine.

This is an uncharacterized protein from Mus musculus (Mouse).